We begin with the raw amino-acid sequence, 158 residues long: MSRRHRAVKREILPDPKFGDVVITRFMNALMYDGKKSTAEGIVYGALEVLRRRGGASADPVVMFHSALDNVKPAVEVRSRRVGGATYQVPVEVRTERRQALAIRWLIDASRKRGENTMQERLSNELLDAVNNRGSAVKKREDTHRMAEANKAFSHYRW.

It belongs to the universal ribosomal protein uS7 family. Part of the 30S ribosomal subunit. Contacts proteins S9 and S11.

In terms of biological role, one of the primary rRNA binding proteins, it binds directly to 16S rRNA where it nucleates assembly of the head domain of the 30S subunit. Is located at the subunit interface close to the decoding center, probably blocks exit of the E-site tRNA. The protein is Small ribosomal subunit protein uS7 of Gluconacetobacter diazotrophicus (strain ATCC 49037 / DSM 5601 / CCUG 37298 / CIP 103539 / LMG 7603 / PAl5).